The chain runs to 294 residues: 4-hydroxy-tetrahydrodipicolinate synthase (294 aa).

Thr45 provides a ligand contact to pyruvate. Tyr133 acts as the Proton donor/acceptor in catalysis. Lys161 serves as the catalytic Schiff-base intermediate with substrate. Pyruvate is bound at residue Ile203.

Belongs to the DapA family. Homotetramer; dimer of dimers.

Its subcellular location is the cytoplasm. The catalysed reaction is L-aspartate 4-semialdehyde + pyruvate = (2S,4S)-4-hydroxy-2,3,4,5-tetrahydrodipicolinate + H2O + H(+). The protein operates within amino-acid biosynthesis; L-lysine biosynthesis via DAP pathway; (S)-tetrahydrodipicolinate from L-aspartate: step 3/4. Catalyzes the condensation of (S)-aspartate-beta-semialdehyde [(S)-ASA] and pyruvate to 4-hydroxy-tetrahydrodipicolinate (HTPA). This chain is 4-hydroxy-tetrahydrodipicolinate synthase, found in Thioalkalivibrio sulfidiphilus (strain HL-EbGR7).